Here is a 246-residue protein sequence, read N- to C-terminus: Phosphomannomutase 2 (246 aa).

At Ala2 the chain carries N-acetylalanine. The Nucleophile role is filled by Asp12. Mg(2+) contacts are provided by Asp12 and Asp14. The active-site Proton donor/acceptor is Asp14. Arg21, Arg123, Arg134, and Arg141 together coordinate alpha-D-mannose 1-phosphate. At Lys149 the chain carries N6-acetyllysine. Alpha-D-mannose 1-phosphate contacts are provided by Ser179 and Asp181. Mg(2+)-binding residues include Asp209, Phe221, Asp223, and Thr226.

This sequence belongs to the eukaryotic PMM family. As to quaternary structure, homodimer.

It localises to the cytoplasm. The catalysed reaction is alpha-D-mannose 1-phosphate = D-mannose 6-phosphate. It participates in nucleotide-sugar biosynthesis; GDP-alpha-D-mannose biosynthesis; alpha-D-mannose 1-phosphate from D-fructose 6-phosphate: step 2/2. Its function is as follows. Involved in the synthesis of the GDP-mannose and dolichol-phosphate-mannose required for a number of critical mannosyl transfer reactions. This is Phosphomannomutase 2 (PMM2) from Homo sapiens (Human).